Reading from the N-terminus, the 273-residue chain is Large ribosomal subunit protein uL2 (273 aa).

Disordered regions lie at residues 28–53 (KPFAPLVEKNSKSGGRNNNGRITTRH) and 221–273 (RGTA…RRSK). Positions 39 to 48 (KSGGRNNNGR) are enriched in low complexity.

Belongs to the universal ribosomal protein uL2 family. As to quaternary structure, part of the 50S ribosomal subunit. Forms a bridge to the 30S subunit in the 70S ribosome.

One of the primary rRNA binding proteins. Required for association of the 30S and 50S subunits to form the 70S ribosome, for tRNA binding and peptide bond formation. It has been suggested to have peptidyltransferase activity; this is somewhat controversial. Makes several contacts with the 16S rRNA in the 70S ribosome. The chain is Large ribosomal subunit protein uL2 from Enterobacter sp. (strain 638).